The primary structure comprises 117 residues: Neurotoxic enhancer CSTX-13 (117 aa).

Positions 1-20 (MKVLVIFAVLSLVIFSNCSA) are cleaved as a signal peptide. A propeptide spanning residues 21–47 (ETDEDFFGEESFEADDIIPFIAKEQVR) is cleaved from the precursor. 4 cysteine pairs are disulfide-bonded: C50–C65, C57–C74, C64–C95, and C76–C93. Residues 82-87 (RSETAR) constitute a propeptide that is removed on maturation. Position 116 is a threonine amide (T116).

It belongs to the neurotoxin 19 (CSTX) family. 12 subfamily. As to quaternary structure, heterodimer of A and B chains; disulfide-linked. Interacts with CSTX-1 (AC P81694) (Kd=430 nM), and with CSTX-9 (AC P58604) (Kd=370 nM). As to expression, expressed by the venom gland.

The protein resides in the secreted. The protein localises to the target cell membrane. Synergistic toxin that induces or increases a cytolytic effect when combined with CSTX-1 (AC P81694) or CSTX-9 (AC P58604). When alone, has a weak insecticidal activity, with an unknown molecular target. In Cupiennius salei (American wandering spider), this protein is Neurotoxic enhancer CSTX-13.